The chain runs to 313 residues: Metal ABC transporter substrate-binding lipoprotein (313 aa).

The signal sequence occupies residues 1-23 (MIEKYKNILITFIALAAIVFLVG). C24 is lipidated: N-palmitoyl cysteine. C24 carries the S-diacylglycerol cysteine lipid modification. Zn(2+) is bound by residues H71, H143, E209, and D284.

The protein belongs to the bacterial solute-binding protein 9 family. Lipoprotein receptor antigen (Lrai) subfamily.

Its subcellular location is the cell membrane. Functionally, part of an ATP-driven transport system for a metal; probably for manganese. The sequence is that of Metal ABC transporter substrate-binding lipoprotein (mtsA) from Lactococcus lactis subsp. lactis (strain IL1403) (Streptococcus lactis).